The following is a 359-amino-acid chain: Protein Wnt-5b (359 aa).

The first 17 residues, 1 to 17 (MPSLLLLFTAALLSSWA), serve as a signal peptide directing secretion. C83 and C94 are oxidised to a cystine. N-linked (GlcNAc...) asparagine glycans are attached at residues N93 and N99. Cystine bridges form between C133/C141, C143/C161, C217/C231, C219/C226, C288/C319, C304/C314, C318/C358, C334/C349, C336/C346, and C341/C342. S223 is lipidated: O-palmitoleoyl serine; by PORCN. N291 and N305 each carry an N-linked (GlcNAc...) asparagine glycan.

Belongs to the Wnt family. In terms of assembly, interacts with PORCN. Post-translationally, palmitoleoylation is required for efficient binding to frizzled receptors. Depalmitoleoylation leads to Wnt signaling pathway inhibition.

The protein resides in the secreted. It is found in the extracellular space. Its subcellular location is the extracellular matrix. Functionally, ligand for members of the frizzled family of seven transmembrane receptors. Probable developmental protein. May be a signaling molecule which affects the development of discrete regions of tissues. Is likely to signal over only few cell diameters. The chain is Protein Wnt-5b (WNT5B) from Pongo abelii (Sumatran orangutan).